Reading from the N-terminus, the 157-residue chain is UPF0225 protein PMI1492 (157 aa).

The protein belongs to the UPF0225 family.

The chain is UPF0225 protein PMI1492 from Proteus mirabilis (strain HI4320).